Reading from the N-terminus, the 250-residue chain is Putative beta-carotene-binding protein (250 aa).

Deposited in the epidermis and cuticle of male locusts during their sexual maturation.

Functionally, has beta-carotene-binding activity. May be involved in the transport of carotenes from internal tissues to epidermis and cuticle of the locust. The sequence is that of Putative beta-carotene-binding protein from Schistocerca gregaria (Desert locust).